The primary structure comprises 34 residues: Photosystem II reaction center protein M (34 aa).

Residues 5–25 form a helical membrane-spanning segment; the sequence is ILAFIATALFISIPTAFLLIP.

It belongs to the PsbM family. In terms of assembly, PSII is composed of 1 copy each of membrane proteins PsbA, PsbB, PsbC, PsbD, PsbE, PsbF, PsbH, PsbI, PsbJ, PsbK, PsbL, PsbM, PsbT, PsbX, PsbY, PsbZ, Psb30/Ycf12, at least 3 peripheral proteins of the oxygen-evolving complex and a large number of cofactors. It forms dimeric complexes.

It localises to the plastid. The protein resides in the chloroplast thylakoid membrane. Its function is as follows. One of the components of the core complex of photosystem II (PSII). PSII is a light-driven water:plastoquinone oxidoreductase that uses light energy to abstract electrons from H(2)O, generating O(2) and a proton gradient subsequently used for ATP formation. It consists of a core antenna complex that captures photons, and an electron transfer chain that converts photonic excitation into a charge separation. This subunit is found at the monomer-monomer interface. The protein is Photosystem II reaction center protein M of Psilotum nudum (Whisk fern).